The chain runs to 378 residues: Protein RecA (378 aa).

79 to 86 (GPESSGKT) lines the ATP pocket.

This sequence belongs to the RecA family.

The protein resides in the cytoplasm. Its function is as follows. Can catalyze the hydrolysis of ATP in the presence of single-stranded DNA, the ATP-dependent uptake of single-stranded DNA by duplex DNA, and the ATP-dependent hybridization of homologous single-stranded DNAs. It interacts with LexA causing its activation and leading to its autocatalytic cleavage. This Streptococcus pyogenes serotype M12 (strain MGAS2096) protein is Protein RecA.